A 515-amino-acid polypeptide reads, in one-letter code: Phospholipase A1-Igamma1, chloroplastic (515 aa).

A chloroplast-targeting transit peptide spans 1–44 (MATIPSHNLRPHTTNQRTQYSLSFRPHFSRSTLITFPARSSPAR). The GXSXG signature appears at 301-305 (GHSLG). Serine 303 serves as the catalytic Acyl-ester intermediate. Catalysis depends on charge relay system residues aspartate 366 and histidine 422.

It belongs to the AB hydrolase superfamily. Lipase family. Ubiquitous. Highly expressed in leaves.

The protein localises to the plastid. It localises to the chloroplast. The catalysed reaction is 1,2-dihexadecanoyl-sn-glycero-3-phosphocholine + H2O = 2-hexadecanoyl-sn-glycero-3-phosphocholine + hexadecanoate + H(+). It catalyses the reaction a 1,2-diacyl-3-O-(beta-D-galactosyl)-sn-glycerol + H2O = an acyl-3-O-(beta-D-galactosyl)-sn-glycerol + a fatty acid + H(+). It carries out the reaction a 1,2-diacyl-3-O-[alpha-D-galactosyl-(1-&gt;6)-beta-D-galactosyl]-sn-glycerol + H2O = acyl-3-O-[alpha-D-galactosyl-(1-&gt;6)-beta-D-galactosyl]-sn-glycerol + a fatty acid + H(+). Its function is as follows. Acylhydrolase with a broad specificity. Catalyzes the hydrolysis of phosphatidylcholine at the sn-1 position. Moderate activity toward phosphatidylcholine (PC), monogalactosyldiacylglycerol (MGDG), digalactosyldiacylglycerol (DGDG) and triacylglycerol (TAG). May display dual sn-1/sn-2 substrate specificity. Could be involved in early wound response. In Arabidopsis thaliana (Mouse-ear cress), this protein is Phospholipase A1-Igamma1, chloroplastic.